A 570-amino-acid polypeptide reads, in one-letter code: Dihydroxy-acid dehydratase (570 aa).

The interval 1–25 (MSQQDSPANADHRRRHSSIVVDGPG) is disordered. Cysteine 60 contacts [2Fe-2S] cluster. Residue aspartate 92 coordinates Mg(2+). Cysteine 133 contacts [2Fe-2S] cluster. Mg(2+)-binding residues include aspartate 134 and lysine 135. Lysine 135 carries the N6-carboxylysine modification. Cysteine 202 contacts [2Fe-2S] cluster. Glutamate 453 serves as a coordination point for Mg(2+). Residue serine 479 is the Proton acceptor of the active site.

The protein belongs to the IlvD/Edd family. In terms of assembly, homodimer. The cofactor is [2Fe-2S] cluster. Requires Mg(2+) as cofactor.

The catalysed reaction is (2R)-2,3-dihydroxy-3-methylbutanoate = 3-methyl-2-oxobutanoate + H2O. It catalyses the reaction (2R,3R)-2,3-dihydroxy-3-methylpentanoate = (S)-3-methyl-2-oxopentanoate + H2O. Its pathway is amino-acid biosynthesis; L-isoleucine biosynthesis; L-isoleucine from 2-oxobutanoate: step 3/4. It participates in amino-acid biosynthesis; L-valine biosynthesis; L-valine from pyruvate: step 3/4. Functionally, functions in the biosynthesis of branched-chain amino acids. Catalyzes the dehydration of (2R,3R)-2,3-dihydroxy-3-methylpentanoate (2,3-dihydroxy-3-methylvalerate) into 2-oxo-3-methylpentanoate (2-oxo-3-methylvalerate) and of (2R)-2,3-dihydroxy-3-methylbutanoate (2,3-dihydroxyisovalerate) into 2-oxo-3-methylbutanoate (2-oxoisovalerate), the penultimate precursor to L-isoleucine and L-valine, respectively. The chain is Dihydroxy-acid dehydratase from Chromohalobacter salexigens (strain ATCC BAA-138 / DSM 3043 / CIP 106854 / NCIMB 13768 / 1H11).